The chain runs to 112 residues: uncharacterized protein (112 aa).

This is an uncharacterized protein from Bacillus subtilis (strain 168).